A 315-amino-acid polypeptide reads, in one-letter code: 4-diphosphocytidyl-2-C-methyl-D-erythritol kinase (315 aa).

K10 is an active-site residue. P107–A117 provides a ligand contact to ATP. D148 is an active-site residue. A disordered region spans residues H292–E315.

This sequence belongs to the GHMP kinase family. IspE subfamily.

It carries out the reaction 4-CDP-2-C-methyl-D-erythritol + ATP = 4-CDP-2-C-methyl-D-erythritol 2-phosphate + ADP + H(+). It participates in isoprenoid biosynthesis; isopentenyl diphosphate biosynthesis via DXP pathway; isopentenyl diphosphate from 1-deoxy-D-xylulose 5-phosphate: step 3/6. In terms of biological role, catalyzes the phosphorylation of the position 2 hydroxy group of 4-diphosphocytidyl-2C-methyl-D-erythritol. This is 4-diphosphocytidyl-2-C-methyl-D-erythritol kinase from Corynebacterium efficiens (strain DSM 44549 / YS-314 / AJ 12310 / JCM 11189 / NBRC 100395).